The primary structure comprises 467 residues: DNA repair protein RadA (467 aa).

The segment at Cys10–Cys27 adopts a C4-type zinc-finger fold. Position 98-105 (Gly98–Ser105) interacts with ATP. The RadA KNRFG motif signature appears at Lys260 to Gly264. Residues Asp359–Lys467 form a lon-protease-like region.

The protein belongs to the RecA family. RadA subfamily.

DNA-dependent ATPase involved in processing of recombination intermediates, plays a role in repairing DNA breaks. Stimulates the branch migration of RecA-mediated strand transfer reactions, allowing the 3' invading strand to extend heteroduplex DNA faster. Binds ssDNA in the presence of ADP but not other nucleotides, has ATPase activity that is stimulated by ssDNA and various branched DNA structures, but inhibited by SSB. Does not have RecA's homology-searching function. The chain is DNA repair protein RadA from Brucella abortus (strain 2308).